The following is an 807-amino-acid chain: 85/88 kDa calcium-independent phospholipase A2 (807 aa).

At Ser-13 the chain carries Phosphoserine. 9 ANK repeats span residues 120-147 (WTVTHLAVELGIRECFHHSRIISCANST), 151-181 (EGCTPLHLACRKGDSEILVELVQYCHAQMDV), 185-215 (KGETAFHYAVQGDNPQVLQLLGKNASAGLNQ), 219-248 (QGLTPLHLACKMGKQEMVRVLLLCNARCNI), 251-281 (PGGFPIHTAMKFSQKGCAEMIISMDSNQIHS), 286-312 (YGASPLHWAKNAEMARMLLKRGCDVDS), 316-345 (SGNTALHVAVMRNRFDCVMVLLTYGANAGA), 349-378 (HGNTPLHLAMSKDNMEMVKALIVFGAEVDT), and 382-403 (FGETPALIASKISKLITRKALL). Helical transmembrane passes span 481–501 (LLCLDGGGVKGLVIIQLLIAI) and 512–532 (LFDWVAGTSTGGILALAILHS). A PNPLA domain is found at 482 to 666 (LCLDGGGVKG…LANNPTLDAM (185 aa)). Residues 486–491 (GGGVKG) carry the GXGXXG motif. The GXSXG motif lies at 518-522 (GTSTG). The active-site Nucleophile is Ser-520. Asp-653 (proton acceptor) is an active-site residue. The short motif at 653-655 (DGG) is the DGA/G element. Residues 678 to 687 (RKGQGNKVKK) are calmodulin-binding (1-9-14 motif). A calmodulin-binding (IQ motif) region spans residues 749–760 (AWCEMVGIQYFR).

As to quaternary structure, homodimer formed by catalytic domains tightly interacting through a large hydrophobic interface. The contact area involves 3 alpha helices, several loops and a part of the beta sheet from each monomer. Both active sites of the dimer are in close proximity adopting an open conformation that provide sufficient space for phospholipid access and favoring cooperativity in deacylation-reacylation reactions. Each monomer has 9 ankyrin repeats stacked side-by-side in an elongated structure oriented outwards from the catalytic core. Expressed in neurons of central and peripheral nervous system. Highly expressed in Purkinje cells in cerebellum and dorsal and ventral horn neurons in the spinal cord. Expressed in testis (at protein level). Expressed in skeletal muscle (at protein level).

The protein resides in the cytoplasm. Its subcellular location is the cell membrane. It is found in the mitochondrion. It localises to the cell projection. The protein localises to the pseudopodium. The catalysed reaction is a 1,2-diacyl-sn-glycero-3-phosphocholine + H2O = a 1-acyl-sn-glycero-3-phosphocholine + a fatty acid + H(+). It carries out the reaction a 1-O-alkyl-2-acyl-sn-glycero-3-phosphocholine + H2O = a 1-O-alkyl-sn-glycero-3-phosphocholine + a fatty acid + H(+). The enzyme catalyses 1,2-dihexadecanoyl-sn-glycero-3-phosphocholine + H2O = 1-hexadecanoyl-sn-glycero-3-phosphocholine + hexadecanoate + H(+). It catalyses the reaction 1-hexadecanoyl-2-(9Z-octadecenoyl)-sn-glycero-3-phosphocholine + H2O = 1-hexadecanoyl-sn-glycero-3-phosphocholine + (9Z)-octadecenoate + H(+). The catalysed reaction is 1-hexadecanoyl-2-(9Z,12Z-octadecadienoyl)-sn-glycero-3-phosphocholine + H2O = (9Z,12Z)-octadecadienoate + 1-hexadecanoyl-sn-glycero-3-phosphocholine + H(+). It carries out the reaction 1-hexadecanoyl-2-(5Z,8Z,11Z,14Z-eicosatetraenoyl)-sn-glycero-3-phosphocholine + H2O = 1-hexadecanoyl-sn-glycero-3-phosphocholine + (5Z,8Z,11Z,14Z)-eicosatetraenoate + H(+). The enzyme catalyses 1-octadecanoyl-2-(5Z,8Z,11Z,14Z-eicosatetraenoyl)-sn-glycero-3-phosphocholine + H2O = 1-octadecanoyl-sn-glycero-3-phosphocholine + (5Z,8Z,11Z,14Z)-eicosatetraenoate + H(+). It catalyses the reaction 1-hexadecanoyl-2-(5Z,8Z,11Z,14Z-eicosatetraenoyl)-sn-glycero-3-phosphoethanolamine + H2O = 1-hexadecanoyl-sn-glycero-3-phosphoethanolamine + (5Z,8Z,11Z,14Z)-eicosatetraenoate + H(+). The catalysed reaction is 1,2-dihexadecanoyl-sn-glycero-3-phosphate + H2O = 1-hexadecanoyl-sn-glycero-3-phosphate + hexadecanoate + H(+). It carries out the reaction a 1-acyl-sn-glycero-3-phosphocholine + H2O = sn-glycerol 3-phosphocholine + a fatty acid + H(+). The enzyme catalyses 1-hexadecanoyl-sn-glycero-3-phosphocholine + H2O = sn-glycerol 3-phosphocholine + hexadecanoate + H(+). It catalyses the reaction 1-(5Z,8Z,11Z,14Z-eicosatetraenoyl)-sn-glycero-3-phosphocholine + H2O = sn-glycerol 3-phosphocholine + (5Z,8Z,11Z,14Z)-eicosatetraenoate + H(+). The catalysed reaction is 2-(5Z,8Z,11Z,14Z)-eicosatetraenoyl-sn-glycero-3-phosphocholine + H2O = sn-glycerol 3-phosphocholine + (5Z,8Z,11Z,14Z)-eicosatetraenoate + H(+). It carries out the reaction 1-O-hexadecyl-2-(5Z,8Z,11Z,14Z)-eicosatetraenoyl-sn-glycero-3-phosphocholine + H2O = 1-O-hexadecyl-sn-glycero-3-phosphocholine + (5Z,8Z,11Z,14Z)-eicosatetraenoate + H(+). The enzyme catalyses 1-O-hexadecyl-2-acetyl-sn-glycero-3-phosphocholine + H2O = 1-O-hexadecyl-sn-glycero-3-phosphocholine + acetate + H(+). It catalyses the reaction hexadecanoyl-CoA + H2O = hexadecanoate + CoA + H(+). The catalysed reaction is 1',3'-bis[1,2-di-(9Z-octadecenoyl)-sn-glycero-3-phospho]-glycerol + H2O = 1'-[1,2-di-(9Z-octadecenoyl)-sn-glycero-3-phospho]-3'-[1-(9Z-octadecenoyl)-sn-glycero-3-phospho]-glycerol + (9Z)-octadecenoate + H(+). It carries out the reaction 1'-[1,2-di-(9Z-octadecenoyl)-sn-glycero-3-phospho]-3'-[1-(9Z-octadecenoyl)-sn-glycero-3-phospho]-glycerol + H2O = 1',3'-bis-[1-(9Z-octadecenoyl)-sn-glycero-3-phospho]-glycerol + (9Z)-octadecenoate + H(+). The enzyme catalyses 1',3'-bis-[1,2-di-(9Z,12Z-octadecadienoyl)-sn-glycero-3-phospho]-glycerol + H2O = 1'-[1,2-di-(9Z,12Z-octadecadienoyl)-sn-glycero-3-phospho]-3'-[1-(9Z,12Z-octadecadienoyl)-sn-glycero-3-phospho]-glycerol + (9Z,12Z)-octadecadienoate + H(+). It catalyses the reaction 1-octadecanoyl-2-(15-hydroxy-(5Z,8Z,11Z,13E)-eicosatetraenoyl)-sn-glycero-3-phosphoethanolamine + H2O = 1-octadecanoyl-sn-glycero-3-phosphoethanolamine + 15-hydroxy-(5Z,8Z,11Z,13E)-eicosatetraenoate + H(+). With respect to regulation, inhibited by calcium-activated calmodulin. Activated by ATP. Inhibited by bromoenol lactone (BEL). Its function is as follows. Calcium-independent phospholipase involved in phospholipid remodeling with implications in cellular membrane homeostasis, mitochondrial integrity and signal transduction. Hydrolyzes the ester bond of the fatty acyl group attached at sn-1 or sn-2 position of phospholipids (phospholipase A1 and A2 activity respectively), producing lysophospholipids that are used in deacylation-reacylation cycles. Hydrolyzes both saturated and unsaturated long fatty acyl chains in various glycerophospholipid classes such as phosphatidylcholines, phosphatidylethanolamines and phosphatidates, with a preference for hydrolysis at sn-2 position. Can further hydrolyze lysophospholipids carrying saturated fatty acyl chains (lysophospholipase activity). Upon oxidative stress, contributes to remodeling of mitochondrial phospholipids in pancreatic beta cells, in a repair mechanism to reduce oxidized lipid content. Preferentially hydrolyzes oxidized polyunsaturated fatty acyl chains from cardiolipins, yielding monolysocardiolipins that can be reacylated with unoxidized fatty acyls to regenerate native cardiolipin species. Hydrolyzes oxidized glycerophosphoethanolamines present in pancreatic islets, releasing oxidized polyunsaturated fatty acids such as hydroxyeicosatetraenoates (HETEs). Has thioesterase activity toward fatty-acyl CoA releasing CoA-SH known to facilitate fatty acid transport and beta-oxidation in mitochondria particularly in skeletal muscle. Plays a role in regulation of membrane dynamics and homeostasis. Selectively hydrolyzes sn-2 arachidonoyl group in plasmalogen phospholipids, structural components of lipid rafts and myelin. Regulates F-actin polymerization at the pseudopods, which is required for both speed and directionality of MCP1/CCL2-induced monocyte chemotaxis. Targets membrane phospholipids to produce potent lipid signaling messengers. Generates lysophosphatidate (LPA, 1-acyl-glycerol-3-phosphate), which acts via G-protein receptors in various cell types. Has phospholipase A2 activity toward platelet-activating factor (PAF, 1-O-alkyl-2-acetyl-sn-glycero-3-phosphocholine), likely playing a role in inactivation of this potent pro-inflammatory signaling lipid. In response to glucose, amplifies calcium influx in pancreatic beta cells to promote INS secretion. The polypeptide is 85/88 kDa calcium-independent phospholipase A2 (Pla2g6) (Mus musculus (Mouse)).